A 344-amino-acid chain; its full sequence is Protease HtpX homolog (344 aa).

A run of 3 helical transmembrane segments spans residues 8 to 28, 46 to 66, and 74 to 94; these read VALGLYMLGYLFMFVIAATVA, ALTGVMIVLTTAFVIYLFVLV, and VSFLVGLIAFVVLMNLLTYVA. His-172 lines the Zn(2+) pocket. Glu-173 is an active-site residue. A Zn(2+)-binding site is contributed by His-176. The next 2 helical transmembrane spans lie at 183–203 and 220–240; these read AIMLLFGVLPSVVYYLGVTAV and LAVGVVAVLASFLIQLLVLAF. Glu-245 lines the Zn(2+) pocket.

The protein belongs to the peptidase M48B family. It depends on Zn(2+) as a cofactor.

The protein localises to the cell membrane. The protein is Protease HtpX homolog of Pyrobaculum calidifontis (strain DSM 21063 / JCM 11548 / VA1).